We begin with the raw amino-acid sequence, 145 residues long: Large ribosomal subunit protein uL15 (145 aa).

A disordered region spans residues 23 to 51; the sequence is IGSGWGKTGGRGHKGQKSRSGGKIRKSFE. Positions 32–47 are enriched in basic residues; it reads GRGHKGQKSRSGGKIR.

It belongs to the universal ribosomal protein uL15 family. Part of the 50S ribosomal subunit.

In terms of biological role, binds to the 23S rRNA. The sequence is that of Large ribosomal subunit protein uL15 from Buchnera aphidicola subsp. Cinara cedri (strain Cc).